The sequence spans 252 residues: Trans-aconitate 2-methyltransferase (252 aa).

Belongs to the methyltransferase superfamily. Tam family.

The protein resides in the cytoplasm. It carries out the reaction trans-aconitate + S-adenosyl-L-methionine = (E)-3-(methoxycarbonyl)pent-2-enedioate + S-adenosyl-L-homocysteine. Its function is as follows. Catalyzes the S-adenosylmethionine monomethyl esterification of trans-aconitate. In Escherichia coli O6:K15:H31 (strain 536 / UPEC), this protein is Trans-aconitate 2-methyltransferase.